The chain runs to 374 residues: Protein FAM199X (374 aa).

A disordered region spans residues Tyr-238–Lys-343. Low complexity predominate over residues Ser-261–Thr-295. The span at Asp-315–Gln-334 shows a compositional bias: basic residues. A coiled-coil region spans residues Lys-317 to Leu-346.

This sequence belongs to the FAM199 family.

This Danio rerio (Zebrafish) protein is Protein FAM199X (fam199x).